Reading from the N-terminus, the 381-residue chain is MTTSTGKINLLGLTQPEMEQFFDSIGEKRFRAGQVMKWIHHFGVSDFAAMTNVGKVLREKLEAVAEIRPPEVVSEDISADGTRKWVIRVASGSCVETVYIPTDDRGTLCVSSQAGCALDCSFCSTGKQGFNSNLTAAEVIGQVWLANKSFGTVPAKVDRAITNVVMMGMGEPLLNFDNVIAAMKIMMDDLGYGISKRRVTLSTSGVVPMIDELAKHIDVSLALSLHAPNDELRNKLVPINKKYPLKVLLESCMGYMSTLGGKRVLTVEYTLLKDVNDQPEHAAQMIELLRDVPCKINLIPFNPFPHSGYERPSNNAIRRFQDLLHHGGFNVTTRTTRGDDIDAACGQLVGQVNDRTRRSERYIAVRQLSADVELQDSAASH.

Catalysis depends on Glu96, which acts as the Proton acceptor. The 241-residue stretch at 102–342 (TDDRGTLCVS…TRTTRGDDID (241 aa)) folds into the Radical SAM core domain. An intrachain disulfide couples Cys109 to Cys345. Residues Cys116, Cys120, and Cys123 each coordinate [4Fe-4S] cluster. Residues 170–171 (GE), Ser202, 224–226 (SLH), and Asn302 each bind S-adenosyl-L-methionine. Cys345 (S-methylcysteine intermediate) is an active-site residue.

This sequence belongs to the radical SAM superfamily. RlmN family. It depends on [4Fe-4S] cluster as a cofactor.

It is found in the cytoplasm. It carries out the reaction adenosine(2503) in 23S rRNA + 2 reduced [2Fe-2S]-[ferredoxin] + 2 S-adenosyl-L-methionine = 2-methyladenosine(2503) in 23S rRNA + 5'-deoxyadenosine + L-methionine + 2 oxidized [2Fe-2S]-[ferredoxin] + S-adenosyl-L-homocysteine. The enzyme catalyses adenosine(37) in tRNA + 2 reduced [2Fe-2S]-[ferredoxin] + 2 S-adenosyl-L-methionine = 2-methyladenosine(37) in tRNA + 5'-deoxyadenosine + L-methionine + 2 oxidized [2Fe-2S]-[ferredoxin] + S-adenosyl-L-homocysteine. Functionally, specifically methylates position 2 of adenine 2503 in 23S rRNA and position 2 of adenine 37 in tRNAs. m2A2503 modification seems to play a crucial role in the proofreading step occurring at the peptidyl transferase center and thus would serve to optimize ribosomal fidelity. This Pseudomonas putida (strain GB-1) protein is Dual-specificity RNA methyltransferase RlmN.